The sequence spans 348 residues: Elongation factor Ts (348 aa).

Positions 82–85 are involved in Mg(2+) ion dislocation from EF-Tu; that stretch reads TDFV.

Belongs to the EF-Ts family.

The protein resides in the cytoplasm. Its function is as follows. Associates with the EF-Tu.GDP complex and induces the exchange of GDP to GTP. It remains bound to the aminoacyl-tRNA.EF-Tu.GTP complex up to the GTP hydrolysis stage on the ribosome. This is Elongation factor Ts from Aliarcobacter butzleri (strain RM4018) (Arcobacter butzleri).